Here is a 238-residue protein sequence, read N- to C-terminus: Orotidine 5'-phosphate decarboxylase (238 aa).

Substrate is bound by residues Asp18, Lys40, 67–76 (DMKLLDIDNT), Thr122, Arg183, Gln192, and Arg213. Lys69 functions as the Proton donor in the catalytic mechanism.

This sequence belongs to the OMP decarboxylase family. Type 1 subfamily. Homodimer.

The enzyme catalyses orotidine 5'-phosphate + H(+) = UMP + CO2. The protein operates within pyrimidine metabolism; UMP biosynthesis via de novo pathway; UMP from orotate: step 2/2. Its function is as follows. Catalyzes the decarboxylation of orotidine 5'-monophosphate (OMP) to uridine 5'-monophosphate (UMP). The sequence is that of Orotidine 5'-phosphate decarboxylase from Brucella melitensis biotype 2 (strain ATCC 23457).